The following is a 512-amino-acid chain: 2-isopropylmalate synthase (512 aa).

The Pyruvate carboxyltransferase domain maps to 5–268; it reads LIIFDTTLRD…DLNIDTTHIV (264 aa). Residues Asp14, His202, His204, and Asn239 each contribute to the Mn(2+) site. A regulatory domain region spans residues 394 to 512; it reads AFVSLSQHSE…SQAEKVAAQG (119 aa).

This sequence belongs to the alpha-IPM synthase/homocitrate synthase family. LeuA type 1 subfamily. As to quaternary structure, homodimer. The cofactor is Mn(2+).

Its subcellular location is the cytoplasm. It carries out the reaction 3-methyl-2-oxobutanoate + acetyl-CoA + H2O = (2S)-2-isopropylmalate + CoA + H(+). Its pathway is amino-acid biosynthesis; L-leucine biosynthesis; L-leucine from 3-methyl-2-oxobutanoate: step 1/4. Catalyzes the condensation of the acetyl group of acetyl-CoA with 3-methyl-2-oxobutanoate (2-ketoisovalerate) to form 3-carboxy-3-hydroxy-4-methylpentanoate (2-isopropylmalate). This is 2-isopropylmalate synthase from Variovorax paradoxus (strain S110).